Here is a 368-residue protein sequence, read N- to C-terminus: UDP-N-acetylglucosamine--N-acetylmuramyl-(pentapeptide) pyrophosphoryl-undecaprenol N-acetylglucosamine transferase (368 aa).

UDP-N-acetyl-alpha-D-glucosamine contacts are provided by residues 10–12, Asn124, Ser196, Ile251, and Gln296; that span reads TGG.

It belongs to the glycosyltransferase 28 family. MurG subfamily.

The protein resides in the cell membrane. It carries out the reaction Mur2Ac(oyl-L-Ala-gamma-D-Glu-L-Lys-D-Ala-D-Ala)-di-trans,octa-cis-undecaprenyl diphosphate + UDP-N-acetyl-alpha-D-glucosamine = beta-D-GlcNAc-(1-&gt;4)-Mur2Ac(oyl-L-Ala-gamma-D-Glu-L-Lys-D-Ala-D-Ala)-di-trans,octa-cis-undecaprenyl diphosphate + UDP + H(+). Its pathway is cell wall biogenesis; peptidoglycan biosynthesis. Functionally, cell wall formation. Catalyzes the transfer of a GlcNAc subunit on undecaprenyl-pyrophosphoryl-MurNAc-pentapeptide (lipid intermediate I) to form undecaprenyl-pyrophosphoryl-MurNAc-(pentapeptide)GlcNAc (lipid intermediate II). This is UDP-N-acetylglucosamine--N-acetylmuramyl-(pentapeptide) pyrophosphoryl-undecaprenol N-acetylglucosamine transferase from Limosilactobacillus fermentum (strain NBRC 3956 / LMG 18251) (Lactobacillus fermentum).